We begin with the raw amino-acid sequence, 905 residues long: DNA gyrase subunit A (905 aa).

The Topo IIA-type catalytic domain maps to 35 to 524 (IPDVRDGLKP…GEFDQDIEDL (490 aa)). Tyrosine 123 functions as the O-(5'-phospho-DNA)-tyrosine intermediate in the catalytic mechanism. The GyrA-box motif lies at 551–557 (QKRGGKG).

This sequence belongs to the type II topoisomerase GyrA/ParC subunit family. As to quaternary structure, heterotetramer, composed of two GyrA and two GyrB chains. In the heterotetramer, GyrA contains the active site tyrosine that forms a transient covalent intermediate with DNA, while GyrB binds cofactors and catalyzes ATP hydrolysis.

It is found in the cytoplasm. It catalyses the reaction ATP-dependent breakage, passage and rejoining of double-stranded DNA.. In terms of biological role, a type II topoisomerase that negatively supercoils closed circular double-stranded (ds) DNA in an ATP-dependent manner to modulate DNA topology and maintain chromosomes in an underwound state. Negative supercoiling favors strand separation, and DNA replication, transcription, recombination and repair, all of which involve strand separation. Also able to catalyze the interconversion of other topological isomers of dsDNA rings, including catenanes and knotted rings. Type II topoisomerases break and join 2 DNA strands simultaneously in an ATP-dependent manner. This chain is DNA gyrase subunit A, found in Rickettsia typhi (strain ATCC VR-144 / Wilmington).